The primary structure comprises 473 residues: O-methyltransferase aclU (473 aa).

Residues D320 and 354-356 (GDF) contribute to the S-adenosyl-L-methionine site. The active-site Proton acceptor is the H373.

This sequence belongs to the class I-like SAM-binding methyltransferase superfamily. Cation-independent O-methyltransferase family. COMT subfamily.

It participates in mycotoxin biosynthesis. In terms of biological role, O-methyltransferase; part of the gene cluster that mediates the biosynthesis of aspirochlorine (or antibiotic A30641), an unusual halogenated spiro compound with distinctive antifungal properties due to selective inhibition of protein biosynthesis, and which is also active against bacteria, viruses, and murine tumor cells. The non-ribosomal peptide synthetase (NRPS) aclP is responsible the formation of the diketopiperazine (DKP) core from the condensation of 2 phenylalanine residues. One Phe residue is tailored into chlorotyrosine by hydroxylation and chlorination, whereas the second Phe undergoes an unprecedented C-C bond cleavage to be converted into glycine. After formation of the DKP, sulfur is incorporated into the DKP by conjugation with glutathione by aclG, followed by its stepwise degradation to the thiol by aclI, aclJ and aclK, and the dithiol oxidation by aclT. In addition, oxygenases (aclB, aclC, aclL and aclO) and O-methyltransferases (aclM and aclU) act as tailoring enzymes to produce the intermediate dechloroaspirochlorine. Ultimately, chlorination of dechloroaspirochlorine by the halogenase aclH is the last step in the aspirochlorine pathway. The protein is O-methyltransferase aclU of Aspergillus oryzae (strain ATCC 42149 / RIB 40) (Yellow koji mold).